The chain runs to 654 residues: Glycogen debranching enzyme (654 aa).

Asp-336 (nucleophile) is an active-site residue. The active-site Proton donor is the Glu-371. Residues 459 to 484 (EANGEENRDGTNSNYSDNHGKEGLGG) are disordered.

It belongs to the glycosyl hydrolase 13 family.

It catalyses the reaction Hydrolysis of (1-&gt;6)-alpha-D-glucosidic linkages to branches with degrees of polymerization of three or four glucose residues in limit dextrin.. It functions in the pathway glycan degradation; glycogen degradation. Its function is as follows. Removes maltotriose and maltotetraose chains that are attached by 1,6-alpha-linkage to the limit dextrin main chain, generating a debranched limit dextrin. This Salmonella typhi protein is Glycogen debranching enzyme.